The following is a 152-amino-acid chain: Large ribosomal subunit protein uL22 (152 aa).

It belongs to the universal ribosomal protein uL22 family. Part of the 50S ribosomal subunit.

In terms of biological role, this protein binds specifically to 23S rRNA. It makes multiple contacts with different domains of the 23S rRNA in the assembled 50S subunit and ribosome. Its function is as follows. The globular domain of the protein is located near the polypeptide exit tunnel on the outside of the subunit, while an extended beta-hairpin is found that lines the wall of the exit tunnel in the center of the 70S ribosome. This Cenarchaeum symbiosum (strain A) protein is Large ribosomal subunit protein uL22.